The primary structure comprises 98 residues: Feather beta keratin (98 aa).

An N-acetylserine modification is found at serine 2.

This sequence belongs to the avian keratin family. In terms of assembly, the avian keratins (F-ker, S-ker, C-ker and B-ker) are a complex mixture of very similar polypeptides.

This is Feather beta keratin from Mycteria americana (Wood stork).